The primary structure comprises 156 residues: CRIB domain-containing protein RIC10 (156 aa).

The CRIB domain maps to 30–43; sequence IGFPTDVKHVAHIG. Residues 68 to 77 show a composition bias toward polar residues; sequence RPSSFSNARP. Positions 68 to 156 are disordered; that stretch reads RPSSFSNARP…SYKSTVSRLI (89 aa). A compositionally biased stretch (low complexity) spans 78–96; the sequence is STSFFTSSSSTDFDQGSSQ. Residues 117 to 128 show a composition bias toward basic residues; that stretch reads NNKKKSSRRKKS. Low complexity predominate over residues 129–156; sequence SSSSSSPKSSRSSVLSKSSYKSTVSRLI.

Expressed in roots, leaves, flowers and pollen.

The protein localises to the cytoplasm. Its function is as follows. Functions as a downstream effector of Rho-related GTP binding proteins of the 'Rho of Plants' (ROPs) family. Participates in the propagation of ROP GTPase signals in specific cellular responses. Is involved in pollen tube growth regulation. The protein is CRIB domain-containing protein RIC10 (RIC10) of Arabidopsis thaliana (Mouse-ear cress).